A 303-amino-acid chain; its full sequence is Proline dehydrogenase 2 (303 aa).

Residue Lys-96 participates in substrate binding. Asp-130 is a catalytic residue. Residues Met-131 and Gln-159 each coordinate FAD. Arg-180 is an active-site residue. FAD contacts are provided by residues 183–185 (KGA) and 222–223 (TH). 284 to 285 (RR) serves as a coordination point for substrate.

The protein belongs to the proline dehydrogenase family. It depends on FAD as a cofactor.

The catalysed reaction is L-proline + a quinone = (S)-1-pyrroline-5-carboxylate + a quinol + H(+). Its pathway is amino-acid degradation; L-proline degradation into L-glutamate; L-glutamate from L-proline: step 1/2. In terms of biological role, converts proline to delta-1-pyrroline-5-carboxylate. Important for the use of proline as a sole carbon and energy source or a sole nitrogen source. The sequence is that of Proline dehydrogenase 2 from Bacillus subtilis (strain 168).